The sequence spans 886 residues: Cytosolic carboxypeptidase-like protein 5 (886 aa).

In terms of domain architecture, Peptidase M14 spans 157–570 (YPFSYSDCQD…AMAIAALDMA (414 aa)). The Zn(2+) site is built by H252 and E255. Over residues 344 to 353 (AKSPTNQQPT) the composition is skewed to polar residues. 2 disordered regions span residues 344 to 363 (AKSP…APLS) and 374 to 401 (EAHL…KTDP). H434 contributes to the Zn(2+) binding site. E516 serves as the catalytic Proton donor/acceptor. Disordered regions lie at residues 602–737 (GLTS…RNMG) and 783–846 (TRLQ…PAFS). Positions 621–635 (PKSNNSLPVSCSENA) are enriched in polar residues. Positions 643 to 654 (STGTSTGGSSSS) are enriched in low complexity. Over residues 655 to 666 (QQNSPQMKNSPS) the composition is skewed to polar residues. Residues 714–737 (STTSSLAPSPTLASSGPTSSRNMG) are compositionally biased toward low complexity. Residues 805–815 (SSPTSPIPQTR) show a composition bias toward polar residues. Residue S841 is modified to Phosphoserine.

It belongs to the peptidase M14 family. It depends on Zn(2+) as a cofactor. Widely expressed. Highly expressed in testis, and moderately in pituitary, brain, eye and kidney.

The protein resides in the cytoplasm. Its subcellular location is the cytosol. It localises to the nucleus. The protein localises to the cytoskeleton. It is found in the spindle. The protein resides in the midbody. The catalysed reaction is gamma-L-glutamyl-L-glutamyl-[protein] + H2O = L-glutamyl-[protein] + L-glutamate. It catalyses the reaction (L-glutamyl)(n+1)-gamma-L-glutamyl-L-glutamyl-[protein] + H2O = (L-glutamyl)(n)-gamma-L-glutamyl-L-glutamyl-[protein] + L-glutamate. It carries out the reaction C-terminal L-alpha-aminoacyl-L-glutamyl-[tubulin] + H2O = C-terminal L-alpha-aminoacyl-[tubulin] + L-glutamate. The enzyme catalyses C-terminal L-alpha-aminoacyl-L-glutamyl-L-glutamyl-[tubulin] + H2O = C-terminal L-alpha-aminoacyl-L-glutamyl-[tubulin] + L-glutamate. In terms of biological role, metallocarboxypeptidase that mediates deglutamylation of tubulin and non-tubulin target proteins. Catalyzes the removal of polyglutamate side chains present on the gamma-carboxyl group of glutamate residues within the C-terminal tail of alpha- and beta-tubulin. Cleaves alpha- and gamma-linked polyglutamate tubulin side-chain, as well as the branching point glutamate. Also catalyzes the removal of alpha-linked glutamate residues from the carboxy-terminus of alpha-tubulin. Mediates deglutamylation of nucleotidyltransferase CGAS, leading to CGAS antiviral defense response activation. In Mus musculus (Mouse), this protein is Cytosolic carboxypeptidase-like protein 5.